Consider the following 466-residue polypeptide: Tubulointerstitial nephritis antigen-like (466 aa).

An N-terminal signal peptide occupies residues 1-21 (MWGCWLGLLLLLLAGQAALEA). One can recognise an SMB domain in the interval 49–96 (EQDMCCRGRADECALPYLGATCYCDLFCNRTVSDCCPDFWDFCLGIPP). 5 cysteine pairs are disulfide-bonded: C53–C72, C70–C72, C70–C84, C76–C83, and C84–C91. The N-linked (GlcNAc...) asparagine glycan is linked to N77. N-linked (GlcNAc...) asparagine glycosylation is present at N160.

It belongs to the peptidase C1 family. Glycosylated. In terms of tissue distribution, highly expressed in kidney, heart and adrenocortical cells of adrenal glands. Moderately expressed in spleen and liver. Also found in prostate, seminal vesicle, epididymis and testis in male reproductive organs. In adrenal glands is found in the outer cortical regions corresponding to the zona glomerulosa (zG) and the undifferentiated cell zone (zU) (at protein level).

It localises to the secreted. Its function is as follows. May be implicated in the adrenocortical zonation and in mechanisms for repressing the CYP11B1 gene expression in adrenocortical cells. This is a non catalytic peptidase C1 family protein. The sequence is that of Tubulointerstitial nephritis antigen-like (Tinagl1) from Mus musculus (Mouse).